A 163-amino-acid polypeptide reads, in one-letter code: MSFVSKTIIEADHELRYLNGAELEILRAYLNSSEKRIKVIKTLRDREKEIISKASRKLFQIHPDYIGPGGNASGSRQRALCLRDYGWYLRLITYSIIAGDKNPVERIGLLGVRDMYNSLGVPLIGMVDSIQCLKDAALAELKSEEEVKLAEPYFDFVIQNMAQ.

Position 71 is an N4-methylasparagine (asparagine 71). (2R,3E)-phycocyanobilin is bound at residue cysteine 81.

The protein belongs to the phycobiliprotein family. Post-translationally, contains one covalently linked bilin chromophore.

Its subcellular location is the plastid. The protein localises to the chloroplast thylakoid membrane. Functionally, allophycocyanin is a photosynthetic bile pigment-protein complex with maximum absorption at approximately 650 nanometers. The protein is Allophycocyanin alpha-B chain (apcD) of Cyanidium caldarium (Red alga).